The following is a 560-amino-acid chain: Vacuolar protein 8 (560 aa).

A lipid anchor (N-myristoyl glycine) is attached at Gly2. Cys4 carries S-palmitoyl cysteine lipidation. ARM repeat units lie at residues 39–76 (NRAE…FAEI), 77–116 (TERD…NLAV), 118–157 (TDNK…NLAT), 159–198 (EENK…NMTH), 200–239 (DENR…NIAV), 243–282 (NRRK…NLAS), 284–323 (EKYQ…NISI), 325–365 (PQNE…NLAA), and 409–448 (DELK…NLSS).

The protein belongs to the beta-catenin family.

It is found in the vacuole membrane. In terms of biological role, functions in both vacuole inheritance and protein targeting from the cytoplasm to vacuole. The chain is Vacuolar protein 8 (VAC8) from Chaetomium globosum (strain ATCC 6205 / CBS 148.51 / DSM 1962 / NBRC 6347 / NRRL 1970) (Soil fungus).